The sequence spans 257 residues: Tryptophan synthase alpha chain (257 aa).

Catalysis depends on proton acceptor residues Glu-51 and Asp-62.

Belongs to the TrpA family. In terms of assembly, tetramer of two alpha and two beta chains.

It carries out the reaction (1S,2R)-1-C-(indol-3-yl)glycerol 3-phosphate + L-serine = D-glyceraldehyde 3-phosphate + L-tryptophan + H2O. It functions in the pathway amino-acid biosynthesis; L-tryptophan biosynthesis; L-tryptophan from chorismate: step 5/5. Its function is as follows. The alpha subunit is responsible for the aldol cleavage of indoleglycerol phosphate to indole and glyceraldehyde 3-phosphate. This chain is Tryptophan synthase alpha chain, found in Nitratidesulfovibrio vulgaris (strain DP4) (Desulfovibrio vulgaris).